The primary structure comprises 344 residues: tRNA N6-adenosine threonylcarbamoyltransferase (344 aa).

Fe cation contacts are provided by H112 and H116. Substrate contacts are provided by residues 135–139, D168, G181, and N271; that span reads LVSGG. Residue D299 participates in Fe cation binding. The interval 323–344 is disordered; sequence RARPRWPLDPEAEPVRGAGVKA.

The protein belongs to the KAE1 / TsaD family. The cofactor is Fe(2+).

It localises to the cytoplasm. The enzyme catalyses L-threonylcarbamoyladenylate + adenosine(37) in tRNA = N(6)-L-threonylcarbamoyladenosine(37) in tRNA + AMP + H(+). In terms of biological role, required for the formation of a threonylcarbamoyl group on adenosine at position 37 (t(6)A37) in tRNAs that read codons beginning with adenine. Is involved in the transfer of the threonylcarbamoyl moiety of threonylcarbamoyl-AMP (TC-AMP) to the N6 group of A37, together with TsaE and TsaB. TsaD likely plays a direct catalytic role in this reaction. The protein is tRNA N6-adenosine threonylcarbamoyltransferase of Erythrobacter litoralis (strain HTCC2594).